A 294-amino-acid polypeptide reads, in one-letter code: Bifunctional protein FolD (294 aa).

NADP(+) is bound by residues 166 to 168 (GRS), Ser191, and Ile232.

Belongs to the tetrahydrofolate dehydrogenase/cyclohydrolase family. In terms of assembly, homodimer.

It catalyses the reaction (6R)-5,10-methylene-5,6,7,8-tetrahydrofolate + NADP(+) = (6R)-5,10-methenyltetrahydrofolate + NADPH. The catalysed reaction is (6R)-5,10-methenyltetrahydrofolate + H2O = (6R)-10-formyltetrahydrofolate + H(+). The protein operates within one-carbon metabolism; tetrahydrofolate interconversion. Functionally, catalyzes the oxidation of 5,10-methylenetetrahydrofolate to 5,10-methenyltetrahydrofolate and then the hydrolysis of 5,10-methenyltetrahydrofolate to 10-formyltetrahydrofolate. The polypeptide is Bifunctional protein FolD (Bradyrhizobium sp. (strain ORS 278)).